Here is a 942-residue protein sequence, read N- to C-terminus: MKIKILSAMIASSLLIGCVIPTVKASQSAIKSIETNRTITKVRTGMLSGGSSIITTSYEGTVAAYKFNGEKLWENELSGFMNHDIWVQDINGDGLVEIFAANADGNVYCINSDGSLKWTFGLNEVPMNSVTVISDADEKYVVAGGYDKNLYYISANGELLKTIESSAYSEEGVFGDGVKPEARTHTVNFVRPVKSSDGTEKLVVLGTNNSLQSSGRFYIFEPFADLPSEKSRISIKKGIGDLRTVDFDNDGNDELTLGNSAQIGDAAISVMNLDDLSQKKSQINDIARRIDRFGYRVAQTEVVMNEGTPTYLTLFGSRILLTPESFDVNDSEILANKYSYYDIWKDKSSNKLVLASAQSGGSQVHIIDTSNPSWKSAYEELEPQGKLAAIQENTREVERQLSNFQKPTRERAPLPVYFISESRNEIPATIERSESLYDSPVFLNYSTLPNVENWDRSEVLADNPKYRDKRDRRKNYTLSSEEMFNKLSAGYESSDGISQWAGHGNDPYMISLATMKRIISSGDGKKTVNIYPEIEGHGDAFNKVLNDHFYPLAEFSSENNANLFMRNKHTFWQSTIYAPEWSELRSGRLADAFVPAMEETTDKSMEMSVAGRMGLWAAGSVDNWGERYARDNPSFDRLRQHSHQMVPNHALRQIIYKIASGARYINNFGFNQEYMSLAWELIGKGALYVPKREELLSLSPVHISMKEPDPIYRETSNNVKWTTFYDEEKDSIPYVFSRLNGTWPGAKTLPWDYSNYAADTKERRLDFIPKFPKGLVLITPVQQGKFKDEGTVRGTLADNMHPIYKDIMKEYITDGKNYYNANGEQVMAADSVRYRQIKNKIEEKSNLLPMTVSGEAAWVVAQSARKHLRLTLVDSGYLNPSNKVAKVKFNSVTPVAIVDVLSGETFSPDSNGVVEIPVLAGAFRFIDVKITEDLRNMQSSTL.

The first 25 residues, Met-1 to Ala-25, serve as a signal peptide directing secretion.

Monomer.

The protein localises to the secreted. It carries out the reaction Endohydrolysis of (1-&gt;4)-beta-linkages in the backbone of lambda-carrageenan, resulting in the tetrasaccharide alpha-D-Galp2,6S2-(1-&gt;3)-beta-D-Galp2S-(1-&gt;4)-alpha-D-Galp2,6S2-(1-&gt;3)-D-Galp2S.. Functionally, hydrolyzes lambda-carrageenan with inversion of anomeric configuration. Does not hydrolyze iota- and kappa-carrageenans, agarose or porphyran. In Pseudoalteromonas sp, this protein is Lambda-carrageenase.